A 509-amino-acid chain; its full sequence is tRNA-2-methylthio-N(6)-dimethylallyladenosine synthase (509 aa).

The segment covering 1-15 has biased composition (polar residues); sequence MNEQQRLASQQVNSS. Residues 1–26 are disordered; it reads MNEQQRLASQQVNSSTKKEEKDYSKY. Positions 16-25 are enriched in basic and acidic residues; that stretch reads TKKEEKDYSK. The MTTase N-terminal domain occupies 66-184; that stretch reads RKFYIRTYGC…LPYILKDAMF (119 aa). Residues C75, C111, C145, C221, C225, and C228 each contribute to the [4Fe-4S] cluster site. In terms of domain architecture, Radical SAM core spans 207–437; sequence RRGDIKAWVN…NALVNKLAIE (231 aa). The 64-residue stretch at 440-503 folds into the TRAM domain; the sequence is DRYKGQIVEV…TWSLNGELVE (64 aa).

The protein belongs to the methylthiotransferase family. MiaB subfamily. Monomer. [4Fe-4S] cluster serves as cofactor.

Its subcellular location is the cytoplasm. It catalyses the reaction N(6)-dimethylallyladenosine(37) in tRNA + (sulfur carrier)-SH + AH2 + 2 S-adenosyl-L-methionine = 2-methylsulfanyl-N(6)-dimethylallyladenosine(37) in tRNA + (sulfur carrier)-H + 5'-deoxyadenosine + L-methionine + A + S-adenosyl-L-homocysteine + 2 H(+). Catalyzes the methylthiolation of N6-(dimethylallyl)adenosine (i(6)A), leading to the formation of 2-methylthio-N6-(dimethylallyl)adenosine (ms(2)i(6)A) at position 37 in tRNAs that read codons beginning with uridine. This Bacillus cereus (strain ZK / E33L) protein is tRNA-2-methylthio-N(6)-dimethylallyladenosine synthase.